The primary structure comprises 652 residues: Sciellin (652 aa).

Residues 1–10 show a composition bias toward basic residues; sequence MSNFSSRKKS. Disordered regions lie at residues 1 to 29 and 43 to 180; these read MSNFSSRKKSPTGNDLKSARGAELRQQGF and SWIK…KPLG. Residues 66–95 show a composition bias toward basic and acidic residues; the sequence is NSHDALDRKLIERDEPKATISRYRSEDMLD. Residue Lys-82 is modified to N6-acetyllysine. Over residues 97-110 the composition is skewed to polar residues; that stretch reads TLSSFRTPQSTKTP. Positions 111-130 are enriched in low complexity; it reads AVSSFNANTTATASTPATTP. A compositionally biased stretch (pro residues) spans 161–170; sequence LHPPLPPKPC. Tandem repeats lie at residues 207–226, 227–241, 242–261, 262–281, 282–301, 302–320, 321–340, 341–360, 361–380, 381–398, 399–418, 419–438, 439–458, 459–477, and 478–496. Residues 207–496 are 15 X approximate tandem repeats; it reads TEDLDDIIRV…VNSHVAEKNG (290 aa). Ser-264 is modified (phosphoserine). Ser-343 carries the post-translational modification Phosphoserine. The interval 353–385 is disordered; that stretch reads EVNRSNKGGPSLDNFTKGVPARSRANQRDQDLD. The tract at residues 436–455 is disordered; the sequence is NQRNHDVDSTIRGNPTGTRC. Over residues 446–455 the composition is skewed to polar residues; that stretch reads IRGNPTGTRC. The region spanning 583–649 is the LIM zinc-binding domain; that stretch reads DMCTYCRKPL…EPCYSKVMAK (67 aa).

Expressed in the upper layers of stratified epithelia, including, ependyma and choroid plexus of the brain ventricles.

It localises to the cytoplasm. The protein localises to the membrane. Its function is as follows. May function in the assembly or regulation of proteins in the cornified envelope. The LIM domain may be involved in homotypic or heterotypic associations and may function to localize sciellin to the cornified envelope. The protein is Sciellin (Scel) of Mus musculus (Mouse).